The sequence spans 88 residues: Apolipoprotein C-I (88 aa).

The signal sequence occupies residues 1-26; the sequence is MRLFLSLPVLVVVLAMVLEGPAPAQA.

It belongs to the apolipoprotein C1 family.

It is found in the secreted. Functionally, inhibitor of lipoprotein binding to the low density lipoprotein (LDL) receptor, LDL receptor-related protein, and very low density lipoprotein (VLDL) receptor. Associates with high density lipoproteins (HDL) and the triacylglycerol-rich lipoproteins in the plasma and makes up about 10% of the protein of the VLDL and 2% of that of HDL. Appears to interfere directly with fatty acid uptake and is also the major plasma inhibitor of cholesteryl ester transfer protein (CETP). Binds free fatty acids and reduces their intracellular esterification. Modulates the interaction of APOE with beta-migrating VLDL and inhibits binding of beta-VLDL to the LDL receptor-related protein. This chain is Apolipoprotein C-I (APOC1), found in Ailurus fulgens (Himalayan red panda).